Here is a 237-residue protein sequence, read N- to C-terminus: Small ribosomal subunit protein uS2 (237 aa).

Belongs to the universal ribosomal protein uS2 family.

The sequence is that of Small ribosomal subunit protein uS2 from Clostridioides difficile (strain 630) (Peptoclostridium difficile).